Here is an 85-residue protein sequence, read N- to C-terminus: Large ribosomal subunit protein bL31B (85 aa).

The protein belongs to the bacterial ribosomal protein bL31 family. Type B subfamily. As to quaternary structure, part of the 50S ribosomal subunit.

This Micrococcus luteus (strain ATCC 4698 / DSM 20030 / JCM 1464 / CCM 169 / CCUG 5858 / IAM 1056 / NBRC 3333 / NCIMB 9278 / NCTC 2665 / VKM Ac-2230) (Micrococcus lysodeikticus) protein is Large ribosomal subunit protein bL31B.